The sequence spans 93 residues: Acylphosphatase (93 aa).

An Acylphosphatase-like domain is found at 5 to 91; the sequence is RAHFLVKGFV…RGETTFRIRS (87 aa). Active-site residues include Arg-20 and Asn-38.

This sequence belongs to the acylphosphatase family.

It catalyses the reaction an acyl phosphate + H2O = a carboxylate + phosphate + H(+). The protein is Acylphosphatase (acyP) of Moorella thermoacetica (strain ATCC 39073 / JCM 9320).